The sequence spans 337 residues: Glyceraldehyde-3-phosphate dehydrogenase 2, cytosolic (337 aa).

Residues 1–151 (MGKIKIGING…YTSDVNIVSN (151 aa)) form a binding to NAD region. Residues 13–14 (RI), Asp35, and Arg82 contribute to the NAD(+) site. Positions 152 to 337 (ASCTTNCLAP…DLIRHMFKTQ (186 aa)) are catalytic. Residues 153–155 (SCT), Thr184, 213–214 (TG), and Arg236 contribute to the D-glyceraldehyde 3-phosphate site. The Nucleophile role is filled by Cys154. Asn318 is a binding site for NAD(+).

The protein belongs to the glyceraldehyde-3-phosphate dehydrogenase family. Homotetramer. As to expression, developing seeds, seedling roots and shoots, and embryo.

Its subcellular location is the cytoplasm. It carries out the reaction D-glyceraldehyde 3-phosphate + phosphate + NAD(+) = (2R)-3-phospho-glyceroyl phosphate + NADH + H(+). It functions in the pathway carbohydrate degradation; glycolysis; pyruvate from D-glyceraldehyde 3-phosphate: step 1/5. Functionally, key enzyme in glycolysis that catalyzes the first step of the pathway by converting D-glyceraldehyde 3-phosphate (G3P) into 3-phospho-D-glyceroyl phosphate. Essential for the maintenance of cellular ATP levels and carbohydrate metabolism. The chain is Glyceraldehyde-3-phosphate dehydrogenase 2, cytosolic (GAPC2) from Zea mays (Maize).